The following is a 792-amino-acid chain: MASKFDNTIVIPASSPEQNWARSVSPCTPSRLFGLSPLSPSPPSLLSPSKLFDEVRLKMQNDQPSPKSPLGKVSKKATAPITTAGTPIVSEHFTQTARSGSSKAKTIRNRKSSKSQEGQNKILTGRVAKATATSKAKDTTGSKLNAGTKKTKTTSNSQDDKPTKEAETKKVVDSEGLNLEEALKRRSDWTPPKASVPAIISLDEDSPSGNCGAKTSFGYSLRDYHYSRDNSVSEAILPRKEGNPTKRRRLELVESEILQERKPLQQRQTKDAEKTRKTKAKPKKHPKTITARMTALYEPIDETEGLFVFDEELEAGEDFKKPAKPKKKTSTKQKEPDCVILSPAAATKSLNDQNFLFGTCSQLERDDSPTFFEETQKAIRLSENLTLENPALSTISTVPSTTSIVIKYTSKKSHWSEAARDFHGAVVQPEIIDMTDSPTIDTALSQLSEMNREAPKMASLVSAKPTSGIKPLTEKEIIPSCRPTADIQSTSSKPKSNKIGPDIVGKKAEPSTKKPTNQLPEMPNFNGYTDVELRKKVKSYGLKAIGRRKRLIALLDKCWQSKHGNVATSADDVETSSLAAINGTASVSTARISDTQVSEELPVRKKSDGESKAASRAGKRKVVEKPAARKDETAAKKAASPIRTSSYMVDEIEDSEEEIIPSPTRIRVQRQSSTRQTTPAIGCLPLGSKSKRPSTKNKASTFDECTLIELQSSIARAIRLQTRPKNLLTNGSCPPQLTWHEKILLYEPIILEDFATWLNTEGFALVSEDREVGVALVRTWCESQGICCTFRA.

Disordered stretches follow at residues 59–173 (MQND…KVVD), 254–287 (ESEI…KHPK), 484–523 (TADI…PEMP), and 593–697 (SDTQ…STKN). The segment covering 77–88 (ATAPITTAGTPI) has biased composition (low complexity). Polar residues predominate over residues 92–104 (HFTQTARSGSSKA). 2 stretches are compositionally biased toward basic and acidic residues: residues 158 to 173 (QDDK…KVVD) and 258 to 275 (LQER…AEKT). Residues 276-287 (RKTKAKPKKHPK) are compositionally biased toward basic residues. Basic and acidic residues-rich tracts occupy residues 601 to 613 (LPVR…ESKA) and 621 to 635 (KVVE…ETAA). Residues 650 to 659 (DEIEDSEEEI) are compositionally biased toward acidic residues. Polar residues predominate over residues 669 to 679 (QRQSSTRQTTP).

It belongs to the SLX4 family. Forms a heterodimer with slx1. Phosphorylated in response to DNA damage.

The protein localises to the nucleus. Its function is as follows. Regulatory subunit of the slx1-slx4 structure-specific endonuclease that resolves DNA secondary structures generated during DNA repair and recombination. Has endonuclease activity towards branched DNA substrates, introducing single-strand cuts in duplex DNA close to junctions with ss-DNA. The chain is Structure-specific endonuclease subunit slx4 (slx4) from Talaromyces marneffei (strain ATCC 18224 / CBS 334.59 / QM 7333) (Penicillium marneffei).